We begin with the raw amino-acid sequence, 445 residues long: Tubby-like F-box protein 8 (445 aa).

Residues 56–102 (ESRWASLPPELLRDVIRRLEASESTWPSRKDVVSCAAVCKAWREMCK) enclose the F-box domain.

Belongs to the TUB family. As to expression, ubiquitous.

This chain is Tubby-like F-box protein 8 (TULP8), found in Oryza sativa subsp. japonica (Rice).